The following is a 145-amino-acid chain: Ribosome maturation factor RimP (145 aa).

It belongs to the RimP family.

Its subcellular location is the cytoplasm. Functionally, required for maturation of 30S ribosomal subunits. This is Ribosome maturation factor RimP from Borrelia garinii subsp. bavariensis (strain ATCC BAA-2496 / DSM 23469 / PBi) (Borreliella bavariensis).